The primary structure comprises 62 residues: Cryptic Mu-phage protein com (62 aa).

Belongs to the com family.

The chain is Cryptic Mu-phage protein com from Shigella dysenteriae.